Consider the following 1417-residue polypeptide: MVSFFKTPIFILIIFLYLNEKVICSINENQNENDTISQNVNQHENINQNVNDNDNIEQLKSMIGNDELHKNLTILEKLILESLEKDKLKYPLLKQGTEQLIDISKFNKKNITDADDETYIIPTVQSSFHDIVKYEHLIKEQSIEIYNSDISDKIKKKIFIVRTLKTIKLMLIPLNSYKQNNDLKSALEELNNVFTNKEAQKESSPIGDHGTFFRKLLTHVRTIKENEDIENKGETLILGDNKIDVMNSNDFFFTTNSNVKFMENLDDITNQYGLGLINHLGPHLIALGHFTVLKLALKNYKNYFEAKSIKFFSWQKILEFSMSDRFKVLDMMCNHESVYYSEKKRRKTYLKVDRSSTSMECNILEYLLHYFNKYQLEIIKTTQDTDFDLHGMMEHKYIKDYFFSFMCNDPKECIIYHTNQFKKEANEENTFPEQEEPNREISAYNLYLNYYYFMKRYSSYGVKKTLYVHLLNLTGLLNYDTRSYVTSLYLPGYYNAVEMSFTEEKEFSKLFESLIQCIEKCHSDQARQISKDSNLLNDITKCDLCKGAFLYSNMKFDEVPSMLQKFYLYLTKGLKIQKVSSLIKTLDIYQDYSNYLSHDINWYTFLFLFRLTSFKEISKKNVAEAMYLNIKDEDTFNKTVVTNYWYPSPIKKYYTLYVRKHIPNNLVDELEKLMKSGTLEKMKKSLTFLVHVNSFLQLDFFHQLNEPPLGLPRSYPLSLVLEHKFKEWMDSSPAGFYFSNYQNPYVRKDLHDKVLSQKFEPPKMNQWNKVLKSLIECAYDMYFEQRHVKNLYKYHNIYNINNKLMLMRDSIDLYKTHFDDVLFFADIFNMRKYMTATPVYKKVKDRVYHTLHSITGNSVNFYKYGIIYGFKVNKEILKEVVDELYSIYNFNTDIFTDTSFLQTVYLLFRRIEETYRTQRRDDKISVNNVFFMNVVNNYSKLNKEEREIEIHNSMASRYYAKTMFAAFQMLFSTMLSNNVDNLDKAYGLSENIQVATSTSAFLTFAYVYNGSIMDSVTNSLLPPYAKKPITQLKYGKTFVFSNYFMLASKMYDMLNYKNLSLLCEYQAVASANFYSAKKVGQFIGRKFLPITTYFLVMRISWTHAFTTGQHLICAFDPKGCTADCKNSAPCYKSPESFFFTHALAAEASKYLFFYFFTNLYLDAYKSFPGGFGPAIKEQTQHVQEQTYERKPSVHSFNRNFFMELANGFMYAFCFFAISQMYAYFENINFYITSNFRFLDRYYGVFNKYFINYARIKLKEITSDLLIKYEREAYLSMKKYGYLGEVIAARLSPKDKIMNYVHETNDDVMSNLRRYDMENAFKNKMSTYVDDFAFFDDCGKNEQFLNERCDYCPVIEEVEETQLFTTTGDKNTNKTTEIKKQTSTYIDTEKMNEADSADSDDEKDSDTPDDELMISRFH.

A signal peptide spans 1–24 (MVSFFKTPIFILIIFLYLNEKVIC). Disulfide bonds link cysteine 333–cysteine 361, cysteine 407–cysteine 413, cysteine 517–cysteine 545, and cysteine 521–cysteine 542. A helical membrane pass occupies residues 1204 to 1224 (LANGFMYAFCFFAISQMYAYF). Residues 1383 to 1417 (TYIDTEKMNEADSADSDDEKDSDTPDDELMISRFH) form a disordered region. Residues 1394 to 1411 (DSADSDDEKDSDTPDDEL) are compositionally biased toward acidic residues.

Self-associates. Component of the RhopH complex. RhopH complex is at least composed of CLAG3.1/CLAG3.2, RhopH2 and RhopH3 with a 1:1:1 subunit stoichiometry. CLAG3.1/CLAG3.2 mediates subunit association through independent contacts with RhopH2 and RhopH3, which do not directly interact with one another. Interacts with RhopH2. Interacts with RhopH3.

It localises to the host cell membrane. The protein resides in the host cytoplasm. Its subcellular location is the cytoplasmic vesicle. The protein localises to the secretory vesicle. It is found in the rhoptry. Its function is as follows. Participates in the formation of new permeability pathways in Plasmodium-infected erythrocytes enabling the uptake of nutrients from the blood plasma. The chain is Cytoadherence-linked asexual protein 3.1 from Plasmodium falciparum.